Consider the following 633-residue polypeptide: Guanylate-binding protein 6 (633 aa).

The segment at methionine 1–cysteine 310 is GTPase domain (Globular). One can recognise a GB1/RHD3-type G domain in the interval serine 35–arginine 277. GTP is bound by residues glycine 45–serine 52, leucine 67–serine 69, and aspartate 97–leucine 101.

The protein belongs to the TRAFAC class dynamin-like GTPase superfamily. GB1/RHD3 GTPase family. GB1 subfamily.

The protein resides in the cytoplasmic vesicle. The catalysed reaction is GTP + H2O = GDP + phosphate + H(+). Its function is as follows. Interferon (IFN)-inducible GTPase that plays important roles in innate immunity against a diverse range of bacterial, viral and protozoan pathogens, such as bacterial pathogens Listeria monocytogenes and Mycobacterium bovis BCG as well as the protozoan pathogen Toxoplasma gondii. Confers protection to several pathogens, including the bacterial pathogens Listeria monocytogenes and Mycobacterium bovis BCG as well as the protozoan pathogen Toxoplasma gondii. This Pongo abelii (Sumatran orangutan) protein is Guanylate-binding protein 6 (GBP6).